A 186-amino-acid polypeptide reads, in one-letter code: ATP synthase subunit delta (186 aa).

The protein belongs to the ATPase delta chain family. In terms of assembly, F-type ATPases have 2 components, F(1) - the catalytic core - and F(0) - the membrane proton channel. F(1) has five subunits: alpha(3), beta(3), gamma(1), delta(1), epsilon(1). F(0) has three main subunits: a(1), b(2) and c(10-14). The alpha and beta chains form an alternating ring which encloses part of the gamma chain. F(1) is attached to F(0) by a central stalk formed by the gamma and epsilon chains, while a peripheral stalk is formed by the delta and b chains.

The protein resides in the cell inner membrane. In terms of biological role, f(1)F(0) ATP synthase produces ATP from ADP in the presence of a proton or sodium gradient. F-type ATPases consist of two structural domains, F(1) containing the extramembraneous catalytic core and F(0) containing the membrane proton channel, linked together by a central stalk and a peripheral stalk. During catalysis, ATP synthesis in the catalytic domain of F(1) is coupled via a rotary mechanism of the central stalk subunits to proton translocation. This protein is part of the stalk that links CF(0) to CF(1). It either transmits conformational changes from CF(0) to CF(1) or is implicated in proton conduction. The protein is ATP synthase subunit delta of Brucella melitensis biotype 2 (strain ATCC 23457).